A 316-amino-acid chain; its full sequence is uncharacterized protein (316 aa).

This is an uncharacterized protein from Caenorhabditis elegans.